A 594-amino-acid polypeptide reads, in one-letter code: Insulin-like growth factor 2 mRNA-binding protein 3-A (594 aa).

RRM domains follow at residues 2-75 (NKLY…HSVP) and 81-156 (RKLQ…YIPD). Residues 161 to 177 (PQAPSQQLQQQPQQQHP) show a composition bias toward low complexity. A disordered region spans residues 161–206 (PQAPSQQLQQQPQQQHPQGRRGFGQRGPARQGSPGAAARPKPQTEV). 2 consecutive KH domains span residues 205 to 270 (EVPL…CKII) and 286 to 353 (EIPL…EEEI). A disordered region spans residues 392-415 (GMPPPSVGVPSPTSSTSYPPFGQQ). A compositionally biased stretch (low complexity) spans 399–411 (GVPSPTSSTSYPP). 2 consecutive KH domains span residues 418-483 (SETV…QGRI) and 500-566 (KLET…QRKI).

It belongs to the RRM IMP/VICKZ family. As to quaternary structure, homodimer and multimer. Associates with microtubules. Interaction with a translocation machinery protein TRAPA of the endoplasmic reticulum. Component of a mRNP complex, at least composed of DAZAP1, IGF2BP3, STAU and VgRBP60. The mRNP complex with DAZAP1, IGF2BP3, STAU and VgRBP60 is only found in the cytoplasm. Interacts with a hnRNP 1 related RNA transport protein VgRBP60 both in the nucleus (in a RNA-independent manner) and the cytoplasm (in a RNA-dependent manner). Found in a B3 activator complex.

It is found in the nucleus. Its subcellular location is the cytoplasm. The protein localises to the endoplasmic reticulum. In terms of biological role, RNA-binding protein that acts as a regulator of mRNA transport and localization. Binds to the RNA sequence motif 5'-UUCAC-3'. Preferentially binds to N6-methyladenosine (m6A)-containing mRNAs and increases their stability. Mediates the specific association of Vg1 RNA to microtubules. Binds specifically to the vegetal localization elements (VLE or VgLE) in the 3'-UTR of Vg1 and VegT mRNAs. Binds to the Vg1 and VegT mRNAs in both the nucleus and the cytoplasm. May regulate mRNA translation. Acts as a transcription regulator. Binds to the 5'-[TA]GGTTACT-3' motif within element 3 of the TFIIIA gene promoter. This is Insulin-like growth factor 2 mRNA-binding protein 3-A (igf2bp3-a) from Xenopus laevis (African clawed frog).